A 333-amino-acid polypeptide reads, in one-letter code: Heat shock transcription factor, X-linked member 4 (333 aa).

The segment at 1–66 (MASQNTEQEY…QDNSPPEDRN (66 aa)) is disordered. Low complexity predominate over residues 29–39 (GSSPDPNPDSS). Residues 49–60 (AMSQDPGSQDNS) are compositionally biased toward polar residues. Residues 79–182 (FRLSFPRKLW…PRLLENIQRK (104 aa)) mediate DNA binding. Residues 227 to 275 (QGAPSVQGPSGTQSFRRSGMWSKKSATRHPLGNGPPQEPNGPSWEGTSG) form a disordered region. Residues 228–242 (GAPSVQGPSGTQSFR) are compositionally biased toward polar residues.

It belongs to the HSF family.

It localises to the nucleus. The protein is Heat shock transcription factor, X-linked member 4 of Homo sapiens (Human).